Here is a 163-residue protein sequence, read N- to C-terminus: Globin CTT-V (163 aa).

A signal peptide spans M1–A16. The region spanning P18–A163 is the Globin domain. Heme b-binding residues include H76 and H111.

Belongs to the globin family.

The polypeptide is Globin CTT-V (CTT-V) (Chironomus thummi piger (Midge)).